The sequence spans 803 residues: Dynein axonemal intermediate chain 4 (803 aa).

Residues 1–33 (MPSSPTSTRKQTNFTASVSAQSRKSISFGNPKS) show a composition bias toward polar residues. 3 disordered regions span residues 1–41 (MPSS…GYAG), 88–109 (LYHP…SQEG), and 143–163 (STVS…LEDP). Residues 143–155 (STVSKSSISTTES) show a composition bias toward low complexity. 6 WD repeats span residues 492-532 (QSPY…NTPV), 541-589 (KHLG…DCHD), 616-656 (SRQA…QYLE), 660-700 (GHKG…PFFT), 703-742 (PTTY…LDPL), and 748-787 (NPGI…TPTE).

As to quaternary structure, part of the multisubunit axonemal dynein complex formed at least of two heavy chains and a number of intermediate and light chains. Associated with axonemal dynein subunits such as, DNAH2, DNAI3, and DYNLT1. Interacts with DYNLT1.

It localises to the cytoplasm. It is found in the cytoskeleton. Its subcellular location is the flagellum axoneme. The protein resides in the cilium axoneme. The protein localises to the dynein axonemal particle. Its function is as follows. Plays a critical role in the assembly of axonemal dynein complex, thereby playing a role in ciliary motility. This chain is Dynein axonemal intermediate chain 4, found in Rattus norvegicus (Rat).